The primary structure comprises 158 residues: MARMHARKRGKSGSKRPPRTAPPIWLEYTVEDIENLVVKLRKEGYSTAMIGTILRDQYGIPTVKLFRDPDNPNRKLTITRILEKHGLAPEIPEDLMFLIKRAVNLRKHLEQHPKDLHSMRGLQLIESKIRRLVKYYKRKGKLPKDWRYDPEQAKLLVR.

Over residues 1–18 the composition is skewed to basic residues; sequence MARMHARKRGKSGSKRPP. The tract at residues 1–21 is disordered; sequence MARMHARKRGKSGSKRPPRTA.

The protein belongs to the universal ribosomal protein uS15 family. Part of the 30S ribosomal subunit.

This chain is Small ribosomal subunit protein uS15, found in Pyrococcus abyssi (strain GE5 / Orsay).